A 1774-amino-acid polypeptide reads, in one-letter code: MEPTAAGNLLEIMDLARTLRQEQLFIQQEQTAFGQLTGALETNAGTITKLAFVCAQQRQILNELLVARNDHDPLLSCRRASAYDSAQFMDAKQVLPYEHALAYEDLFNYLYNTPYLLALSLATADRLSLLSSGQLGQIINTIATGLYGNAINTKDVELLLKLLRELIEIQLLGSEQPRRLLRTNSSSFARLYQRLVESLFSARIFLTAALHAPLMGVLSEHDVWLDLDPHKLMQSFSQKERERRFGQAGEGEHGEEYQRNVARFHAETLGKLHTHAQVFVKSLQQSWALFPSSLRWLLQTLSQQLRQTHRHKEQEIRQLLTDLVFTHFISPAIVSADLVGIIDVNVSERMRHNLNQIVQLLQRLALNDEGSELVQLMELLMVGETGEDVVAILPQQTDFERSQLAINQRELSQFVEFFRLLTSRDEYDVSAEERQRLQRILGRIPKQQQQQQSQSELPDATANSPEKQQNNNNKKNNNRSLMRLGKAKKKLANSMSFSNSNSNSNKNLQPAVEQLPPLANGQANSSNISSASNGDLEQCSSHSGSNTSLSSCGAAPAAPTPAPTAVTNDHQYCARDEPVLMFSIYNASAKSKLKPLTEEEVLKMNCIGQDGSNLLPAVACTTGVVAPSSNNDDVSSLEAMRRPQDDASIGNSDNLEAISEAAHSVASSLDLEEQQERDVHENEDNLSDMVSANVSGRGTPNISGRDTPSSQVTDGDGGGGDMAHHHGHHVRAANPQMQKMLLSKARSDIDDKFCKFELKKFEVDENVSIISDTWSTDVLASDSENTLDATGSERGGDRGDRGDRDRDRNFSTPLIPSAVVLPGDNNFVVEALARAGAGVISGPHMDASDQRSESNWSTDVLASDSEKLAEIDTDDNASITAKSDIGPGSGGGAGVPEAGGGGGVVGDDDDEDEQTPGSSGDGEPDPDPDPDRERLRNGSERSQEDSAFFDAVNSYEDAHHLYHGASSLARSSVRTSYHVMGGESSFQQQYKSSGAEGIGRKTTPLMGTSCMRRQTSAESSISNQSLNLEEPPPPPRALAKHHHHHQHRDRDRDRDRDRDHREHHHKSAALKKKKHQEHKEHQHRDLIDFSDCSEDKDEEEQPPGLVQQLLDMFNQEEQQQQQQQQGCSSQSSVEHRRISMEQRSQCIDGRRNGILAGSMRRHQSLNYENHEIMLNSMLPKTDDDKQELLLCAQTQQQLQLEERAAAAENSCSNRAGAGAGAGARGTSKPPSKATGAIPKSISFDASADKEQQPYRDRERERDRERDRERDRDRERDRDRDRDRDRDREHHSAGIFNKLKQGFFKHRRGGSSSSKNNAIAIAAPSSINPNPSPSSATDPGGRSVSFDPSAGVCVSFGTHYCDSSEDILAKYRRKVSSSSEATNSDSTGNGAGGGAAAAAAAAAAHLHKHVNGGLLPGVAFGSVKQKLRTVLSKTDLHSGDFRQTTPMRPLDATTPLQIYLQIQLAQCISLQRLPQISHVAEALRCLEQLERPQHGQLLVELQHDLQRRQSYLQYLMRHRQQLLLRSEQLEQLEVRLRSEARSCQRCLMQSLVRLYLAWARQQDKLEQFQTEFGQLRASDERVELVEEFVEQLLQQLITSADLLDDWQVDAAREAIERMLLELMYQQVMFPNEDADVSRDTVLSAHIGKLQRFVHPAHPALCIAQEYLGEAPWTFAQQQLCHMAAYKTPREKLQCIINCISSIMSLLRMSCGRVPAADDLLPVLIYVVIMANPPYLLSTVEYISCFLGRKLDGENEFYWTLFGSVVKFIKTMDYLD.

Residues 157 to 396 (ELLLKLLREL…EDVVAILPQQ (240 aa)) enclose the Ras-GAP domain. Disordered regions lie at residues 444–480 (IPKQ…NNRS), 517–564 (PLAN…PAPT), 661–727 (AAHS…HHHG), 784–811 (ENTL…RNFS), 869–947 (AEID…EDSA), 983–1102 (ESSF…EEQP), 1115–1142 (QEEQ…SMEQ), and 1214–1342 (RAGA…GGRS). 2 stretches are compositionally biased toward low complexity: residues 519–533 (ANGQ…SASN) and 540–557 (SSHS…AAPA). The span at 674-683 (QQERDVHENE) shows a compositional bias: basic and acidic residues. Positions 688-713 (DMVSANVSGRGTPNISGRDTPSSQVT) are enriched in polar residues. The span at 794 to 809 (RGGDRGDRGDRDRDRN) shows a compositional bias: basic and acidic residues. Residues 887-905 (PGSGGGAGVPEAGGGGGVV) are compositionally biased toward gly residues. Residues 929 to 944 (DPDRERLRNGSERSQE) show a composition bias toward basic and acidic residues. Polar residues predominate over residues 1011 to 1027 (MRRQTSAESSISNQSLN). A compositionally biased stretch (basic residues) spans 1038–1047 (LAKHHHHHQH). Over residues 1048–1060 (RDRDRDRDRDRDH) the composition is skewed to basic and acidic residues. Positions 1061–1076 (REHHHKSAALKKKKHQ) are enriched in basic residues. A compositionally biased stretch (basic and acidic residues) spans 1077 to 1087 (EHKEHQHRDLI). The segment covering 1091-1101 (DCSEDKDEEEQ) has biased composition (acidic residues). The span at 1115–1125 (QEEQQQQQQQQ) shows a compositional bias: low complexity. Basic and acidic residues predominate over residues 1246-1291 (SADKEQQPYRDRERERDRERDRERDRDRERDRDRDRDRDRDREHHS). A compositionally biased stretch (low complexity) spans 1310-1335 (SSSSKNNAIAIAAPSSINPNPSPSSA). The stretch at 1516-1546 (RHRQQLLLRSEQLEQLEVRLRSEARSCQRCL) forms a coiled coil. The 140-residue stretch at 1635–1774 (VSRDTVLSAH…KFIKTMDYLD (140 aa)) folds into the VPS9 domain.

This sequence belongs to the GAPVD1 family.

The protein localises to the membrane. Its function is as follows. Acts both as a GTPase-activating protein (GAP) and a guanine nucleotide exchange factor (GEF), and participates in endocytosis. This chain is Receptor-mediated endocytosis protein 6 homolog, found in Drosophila pseudoobscura pseudoobscura (Fruit fly).